The chain runs to 115 residues: Iron-sulfur cluster insertion protein ErpA (115 aa).

Iron-sulfur cluster-binding residues include C43, C107, and C109.

It belongs to the HesB/IscA family. Homodimer. Iron-sulfur cluster is required as a cofactor.

Functionally, required for insertion of 4Fe-4S clusters for at least IspG. The protein is Iron-sulfur cluster insertion protein ErpA of Buchnera aphidicola subsp. Baizongia pistaciae (strain Bp).